A 221-amino-acid chain; its full sequence is Dynein light chain Tctex-type 4 (221 aa).

Disordered regions lie at residues 1 to 52 (MASR…SRRG) and 65 to 87 (NSLV…VPPL). Over residues 10-21 (RQEEENAKDSGR) the composition is skewed to basic and acidic residues. Position 66 is a phosphoserine (S66).

This sequence belongs to the dynein light chain Tctex-type family. As to quaternary structure, interacts with ENG/endoglin, TGFBR2 and TGFBR3. Interacts with PPP1CC. Ubiquitously expressed. Expressed in testis (at protein level).

The protein localises to the cell projection. It is found in the cilium. It localises to the flagellum. The protein resides in the cytoplasmic vesicle. Its subcellular location is the secretory vesicle. The protein localises to the acrosome. It is found in the cytoplasm. It localises to the cytoskeleton. The protein resides in the cilium axoneme. Its subcellular location is the nucleus. The protein localises to the microtubule organizing center. This Homo sapiens (Human) protein is Dynein light chain Tctex-type 4.